Reading from the N-terminus, the 220-residue chain is ATP-dependent Clp protease proteolytic subunit (220 aa).

S125 acts as the Nucleophile in catalysis. H150 is a catalytic residue.

Belongs to the peptidase S14 family. As to quaternary structure, fourteen ClpP subunits assemble into 2 heptameric rings which stack back to back to give a disk-like structure with a central cavity, resembling the structure of eukaryotic proteasomes.

Its subcellular location is the cytoplasm. The enzyme catalyses Hydrolysis of proteins to small peptides in the presence of ATP and magnesium. alpha-casein is the usual test substrate. In the absence of ATP, only oligopeptides shorter than five residues are hydrolyzed (such as succinyl-Leu-Tyr-|-NHMec, and Leu-Tyr-Leu-|-Tyr-Trp, in which cleavage of the -Tyr-|-Leu- and -Tyr-|-Trp bonds also occurs).. Its function is as follows. Cleaves peptides in various proteins in a process that requires ATP hydrolysis. Has a chymotrypsin-like activity. Plays a major role in the degradation of misfolded proteins. In Bacteroides thetaiotaomicron (strain ATCC 29148 / DSM 2079 / JCM 5827 / CCUG 10774 / NCTC 10582 / VPI-5482 / E50), this protein is ATP-dependent Clp protease proteolytic subunit.